Reading from the N-terminus, the 650-residue chain is Chaperone protein DnaK (650 aa).

The residue at position 200 (Thr200) is a Phosphothreonine; by autocatalysis. Positions 614 to 635 (AGAAGAAGAAEGAAHAGGAQQA) are disordered.

The protein belongs to the heat shock protein 70 family.

Functionally, acts as a chaperone. This is Chaperone protein DnaK from Burkholderia lata (strain ATCC 17760 / DSM 23089 / LMG 22485 / NCIMB 9086 / R18194 / 383).